We begin with the raw amino-acid sequence, 236 residues long: Phospholipid hydroperoxide glutathione peroxidase 1, chloroplastic (236 aa).

The segment covering 1-16 (MVSMTTSSSSYGTFST) has biased composition (low complexity). Residues 1 to 24 (MVSMTTSSSSYGTFSTVVNSSRPN) are disordered. The transit peptide at 1-64 (MVSMTTSSSS…PINPGFLFKS (64 aa)) directs the protein to the chloroplast. The active site involves Cys111.

It belongs to the glutathione peroxidase family. As to expression, expressed in leaves, stems, flowers, green siliques and seeds.

It localises to the plastid. The protein localises to the chloroplast. It carries out the reaction a hydroperoxy polyunsaturated fatty acid + 2 glutathione = a hydroxy polyunsaturated fatty acid + glutathione disulfide + H2O. In terms of biological role, protects cells and enzymes from oxidative damage, by catalyzing the reduction of hydrogen peroxide, lipid peroxides and organic hydroperoxide, by glutathione. The chain is Phospholipid hydroperoxide glutathione peroxidase 1, chloroplastic (GPX1) from Arabidopsis thaliana (Mouse-ear cress).